The chain runs to 739 residues: Lysine decarboxylase (739 aa).

An N6-(pyridoxal phosphate)lysine modification is found at lysine 367. Residues alanine 714–lysine 726 are compositionally biased toward basic and acidic residues. The tract at residues alanine 714 to serine 739 is disordered. Residues alanine 728–serine 739 are compositionally biased toward basic residues.

Belongs to the Orn/Lys/Arg decarboxylase class-I family. It depends on pyridoxal 5'-phosphate as a cofactor.

The protein localises to the cytoplasm. The enzyme catalyses L-lysine + H(+) = cadaverine + CO2. In Hafnia alvei, this protein is Lysine decarboxylase.